The sequence spans 307 residues: MTLLQNADLMTAIVTPFDDEENIDYGRLEYLTNYLIEHGSNGFVIGGTTGETPELTHDEKIELYQHFGEIVNGRVPVIAGTGSNNTKETIAFTNEVAQINGIDYALVVVPPYNKPNQRGMVAHFTAVADSVDLPIIIYNIPGRTGVKMAQETVVELSHHQNIAAVKQCTSLEELEYIVEHRDPDFAVFTGEDAQALTARVLGANGVISVASHTYVDQMRQMYDSLYRGDYQTAGKLQRWLTPRMAALFMFPSPSPVKAVLNAQGFNVGSCRLPILPLNEEEKRKLETALSLPTNSLTAKNLPLNLGE.

Position 49 (T49) interacts with pyruvate. The active-site Proton donor/acceptor is the Y138. Residue K166 is the Schiff-base intermediate with substrate of the active site. I207 serves as a coordination point for pyruvate.

Belongs to the DapA family. Homotetramer; dimer of dimers.

Its subcellular location is the cytoplasm. The catalysed reaction is L-aspartate 4-semialdehyde + pyruvate = (2S,4S)-4-hydroxy-2,3,4,5-tetrahydrodipicolinate + H2O + H(+). The protein operates within amino-acid biosynthesis; L-lysine biosynthesis via DAP pathway; (S)-tetrahydrodipicolinate from L-aspartate: step 3/4. Its function is as follows. Catalyzes the condensation of (S)-aspartate-beta-semialdehyde [(S)-ASA] and pyruvate to 4-hydroxy-tetrahydrodipicolinate (HTPA). In Limosilactobacillus reuteri (strain DSM 20016) (Lactobacillus reuteri), this protein is 4-hydroxy-tetrahydrodipicolinate synthase.